A 23-amino-acid chain; its full sequence is GLWQLIKDKLKDAATGFVTGIQS.

In terms of tissue distribution, expressed by the skin dorsal glands.

It is found in the secreted. Its function is as follows. Has no antimicrobial activity. In Ranoidea dahlii (Dahl's aquatic frog), this protein is Dahlein-4.2.